A 432-amino-acid chain; its full sequence is Negative regulator of systemic acquired resistance SNI1 (432 aa).

As to quaternary structure, interacts with SSN2. Binds to NTL9/CBNAC to promote its binding to promoters of target genes. Component of the SMC5-SMC6 complex which consists at least of SMC5 and SMC6B. Interacts with RAD17. As to expression, expressed at low levels in the veins.

The protein resides in the nucleus. In terms of biological role, component of the SMC5-SMC6 complex, a complex involved in repair of DNA double-strand breaks by homologous recombination. Transcription repressor that prevents expression of pathogenesis-related genes (PR) via histone modifications and binding negative cis-acting elements at their promoters. Negative regulator of hypersensitive response (HR) and systemic acquired resistance (SAR) required to dampen the basal expression of pathogenesis related (PR) genes. Functions synergistically with NTL9/CBNAC as negative regulator of pathogen-induced PR1 expression and basal resistance to a virulent strain of P.syringae. Binds to the PR1 gene promoter to suppress defense response in the absence of pathogen challenge and is removed in response to induction. Negatively regulates both gene expression and DNA recombination during pathogen infection, thus being involved in short-term defense response and a long-term survival strategy. Prevents effective immune responses that involve activation of DNA damage responses, probably by negatively regulating the DNA damage sensors RAD17 and ATR. Negative regulator of defenses against the beet cyst nematode H.schachtii. The sequence is that of Negative regulator of systemic acquired resistance SNI1 from Arabidopsis thaliana (Mouse-ear cress).